Here is a 519-residue protein sequence, read N- to C-terminus: MEIMDSGEPFLQWDKNLSELSEAGENDILYSTHFTDLLDDLSQEALLGQLLSDPFLSGRGDAMDTEEELTRASPVPPHIQAEHSYSLCGDSRPQSPLSHLPGEPGSDAADSESDEWPMEQEDKGIKMEPLLCVPLPALTLTVTPAGSAPEPVIDSCDSAQSLSLPQVKEDSNSPQIKLEPHEVDQFLNLSPKGLECLQMPPTPPSSVGSDSEGSQSPVHPCAPASPTQTPAVLKVAPRAPSSLSSSPLLTAPHKLQGSGPLLLTEEEKRTLIAEGYPVPTKLPLSKAEEKALKKIRRKIKNKISAQESRRKKKEYVDALEKKVETCSNENHELRRKVENLECTNKSLLQQLHSLQAVVAGKVPRSCRVTGTQTSTCLMVVVLCFSLFLGSFYPGLSPCSSITKADLSREISIHDSYTTTVKSRSLLSIQEPGGLDEPHPIGLGGEYPEWDRQADVMAAWRFEQQHKEEEAELHKAEHRPLLLSTNETHAQKAILIDLHTHRSNETAKVIQLDRTVNETS.

Over 1-374 (MEIMDSGEPF…SCRVTGTQTS (374 aa)) the chain is Cytoplasmic. Disordered regions lie at residues 58 to 77 (GRGDAMDTEEELTRASPVPP), 85 to 121 (YSLCGDSRPQSPLSHLPGEPGSDAADSESDEWPMEQE), and 193 to 261 (GLEC…SGPL). Positions 109–119 (ADSESDEWPME) are enriched in acidic residues. Low complexity-rich tracts occupy residues 205–217 (SSVGSDSEGSQSP) and 240–249 (PSSLSSSPLL). A bZIP domain is found at 291 to 354 (ALKKIRRKIK…KSLLQQLHSL (64 aa)). The segment at 293–322 (KKIRRKIKNKISAQESRRKKKEYVDALEKK) is basic motif. Residues 333 to 354 (LRRKVENLECTNKSLLQQLHSL) form a leucine-zipper region. A helical; Signal-anchor for type II membrane protein membrane pass occupies residues 375 to 395 (TCLMVVVLCFSLFLGSFYPGL). Topologically, residues 396 to 519 (SPCSSITKAD…QLDRTVNETS (124 aa)) are lumenal. The short motif at 423–426 (RSLL) is the S1P recognition element. N-linked (GlcNAc...) asparagine glycans are attached at residues Asn485, Asn503, and Asn516.

It belongs to the bZIP family. ATF subfamily. In terms of assembly, binds DNA as a dimer. Post-translationally, upon ER stress, translocated to the Golgi apparatus, where it is processed by regulated intramembrane proteolysis (RIP) to release the cytosol-facing N-terminal transcription factor domain. The cleavage is performed sequentially by site-1 and site-2 proteases (S1P/mbtps1 and S2P/mbtps2).

Its subcellular location is the endoplasmic reticulum membrane. It localises to the nucleus. Functionally, transcription factor involved in unfolded protein response (UPR). In the absence of endoplasmic reticulum (ER) stress, inserted into ER membranes, with N-terminal DNA-binding and transcription activation domains oriented toward the cytosolic face of the membrane. In response to ER stress, transported to the Golgi, where it is cleaved in a site-specific manner by resident proteases S1P/mbtps1 and S2P/mbtps2. The released N-terminal cytosolic domain is translocated to the nucleus to effect transcription of specific target genes. Plays a critical role in chondrogenesis. May protect neuroblastoma cells from ER stress-induced death. In vitro activates transcription of target genes via direct binding to the CRE site. In Danio rerio (Zebrafish), this protein is Cyclic AMP-responsive element-binding protein 3-like protein 2 (creb3l2).